The chain runs to 662 residues: MSERKEGRGKGKGKKKDRGSRGKPGPAEGDPSPALPPRLKEMKSQESAAGSKLVLRCETSSEYSSLRFKWFKNGNELNRKNKPENIKIQKKPGKSELRINKASLADSGEYMCKVISKLGNDSASANITIVESNEFITGMPASTETAYVSSESPIRISVSTEGANTSSSTSTSTTGTSHLIKCAEKEKTFCVNGGECFTVKDLSNPSRYLCKCPNEFTGDRCQNYVMASFYMTSRRKRQETEKPLERKLDHSLVKESKAEELYQKRVLTITGICIALLVVGIMCVVAYCKTKKQRQKLHDRLRQSLRSERSNLVNIANGPHHPNPPPENVQLVNQYVSKNVISSEHIVEREVETSFSTSHYTSTAHHSTTVTQTPSHSWSNGHTESVISESNSVIMMSSVENSRHSSPAGGPRGRLHGLGGPRDNSFLRHARETPDSYRDSPHSERYVSAMTTPARMSPVDFHTPSSPKSPPSEMSPPVSSMTVSMPSVAVSPFVEEERPLLLVTPPRLREKKYDHHPQQLNSFHHNPAHQSTSLPPSPLRIVEDEEYETTQEYESVQEPVKKVTNSRRAKRTKPNGHIANRLEMDSNTSSVSSNSESETEDERVGEDTPFLGIQNPLAASLEVAPAFRLAESRTNPAGRFSTQEELQARLSSVIANQDPIAV.

The propeptide occupies 1–13; the sequence is MSERKEGRGKGKG. The interval 1-52 is disordered; sequence MSERKEGRGKGKGKKKDRGSRGKPGPAEGDPSPALPPRLKEMKSQESAAGSK. At 14 to 265 the chain is on the extracellular side; that stretch reads KKKDRGSRGK…SKAEELYQKR (252 aa). The Ig-like C2-type domain occupies 37 to 128; it reads PRLKEMKSQE…GNDSASANIT (92 aa). Cys57 and Cys112 are joined by a disulfide. 3 N-linked (GlcNAc...) asparagine glycosylation sites follow: Asn120, Asn126, and Asn164. The region spanning 178–222 is the EGF-like domain; sequence HLIKCAEKEKTFCVNGGECFTVKDLSNPSRYLCKCPNEFTGDRCQ. Disulfide bonds link Cys182–Cys196, Cys190–Cys210, and Cys212–Cys221. A helical membrane pass occupies residues 266–288; that stretch reads VLTITGICIALLVVGIMCVVAYC. Over 289–662 the chain is Cytoplasmic; the sequence is KTKKQRQKLH…VIANQDPIAV (374 aa). The span at 358-373 shows a compositional bias: low complexity; that stretch reads SHYTSTAHHSTTVTQT. Disordered stretches follow at residues 358–383, 398–480, and 547–610; these read SHYT…NGHT, SVEN…PVSS, and YETT…DTPF. Polar residues predominate over residues 374–383; that stretch reads PSHSWSNGHT. Residues 410–420 are compositionally biased toward gly residues; the sequence is GPRGRLHGLGG. A compositionally biased stretch (basic and acidic residues) spans 425–445; that stretch reads SFLRHARETPDSYRDSPHSER. The segment covering 564–574 has biased composition (basic residues); sequence TNSRRAKRTKP. Residues 585 to 596 show a composition bias toward low complexity; that stretch reads DSNTSSVSSNSE.

This sequence belongs to the neuregulin family. In terms of assembly, the cytoplasmic domain interacts with the LIM domain region of LIMK1. Forms a ternary complex with ERBB3 and ITGAV:ITGB3 or ITGA6:ITGB4. Interacts with NRDC and BACE1. In terms of processing, proteolytic cleavage close to the plasma membrane on the external face leads to the release of the soluble growth factor form. Post-translationally, N- and O-glycosylated. Extensive glycosylation precedes the proteolytic cleavage. As to expression, widely expressed. Most tissues contain isoform alpha2A and isoform alpha2B. Isoform Alpha2 and isoform beta2 are the predominant forms in mesenchymal and non-neuronal organs. Isoform Beta1 is enriched in brain and spinal cord, but not in muscle and heart. Isoform Alpha2C is highly expressed in spinal cord, moderately in lung, brain, ovary, and stomach, in low amounts in the kidney, skin and heart and not detected in the liver, spleen, and placenta.

The protein localises to the cell membrane. Its subcellular location is the secreted. Its function is as follows. Direct ligand for ERBB3 and ERBB4 tyrosine kinase receptors. Concomitantly recruits ERBB1 and ERBB2 coreceptors, resulting in ligand-stimulated tyrosine phosphorylation and activation of the ERBB receptors. The multiple isoforms perform diverse functions such as inducing growth and differentiation of epithelial, glial, neuronal, and skeletal muscle cells; inducing expression of acetylcholine receptor in synaptic vesicles during the formation of the neuromuscular junction; stimulating lobuloalveolar budding and milk production in the mammary gland and inducing differentiation of mammary tumor cells; stimulating Schwann cell proliferation; implication in the development of the myocardium such as trabeculation of the developing heart. Binds to ERBB4 and ERBB3. Acts as a ligand for integrins and binds (via EGF domain) to integrins ITGAV:ITGB3 or ITGA6:ITGB4. Its binding to integrins and subsequent ternary complex formation with integrins and ERRB3 are essential for NRG1-ERBB signaling. Induces the phosphorylation and activation of MAPK3/ERK1, MAPK1/ERK2 and AKT1, and ligand-dependent ERBB4 endocytosis is essential for the NRG1-mediated activation of these kinases in neurons. This chain is Pro-neuregulin-1, membrane-bound isoform (Nrg1), found in Rattus norvegicus (Rat).